A 219-amino-acid chain; its full sequence is Large ribosomal subunit protein bL25 (219 aa).

The disordered stretch occupies residues Thr188–Lys219. Basic and acidic residues predominate over residues Gly206–Lys219.

This sequence belongs to the bacterial ribosomal protein bL25 family. CTC subfamily. Part of the 50S ribosomal subunit; part of the 5S rRNA/L5/L18/L25 subcomplex. Contacts the 5S rRNA. Binds to the 5S rRNA independently of L5 and L18.

In terms of biological role, this is one of the proteins that binds to the 5S RNA in the ribosome where it forms part of the central protuberance. The protein is Large ribosomal subunit protein bL25 of Elusimicrobium minutum (strain Pei191).